We begin with the raw amino-acid sequence, 217 residues long: MOB kinase activator-like 2 (217 aa).

Residues 15 to 38 (GKESIRGNYKPKKHPRGSSRHTMR) are disordered. Over residues 23–38 (YKPKKHPRGSSRHTMR) the composition is skewed to basic residues. Zn(2+) is bound by residues cysteine 89, cysteine 94, histidine 167, and histidine 172.

Belongs to the MOB1/phocein family.

In Dictyostelium discoideum (Social amoeba), this protein is MOB kinase activator-like 2 (mob2).